A 308-amino-acid chain; its full sequence is MQEIESLHQSVLLQEVLQAFTPLEEGVLIDCTLGLGGHSKALLSQKPHLKLIGIDKDKFAQEIAKERLKAFEGRYNLLSGGFAKRFKEALETHNKEIKGVLVDLGVSSLQLDDDNRGFNFHSHTLDMRMDLKSDLNAQKVINSYPVVALEKIFRDYGEIKEYKKIAHKIAERRAKKPFKDAKDLSDFLSSLSKNKKIHPATLVFQAVRIEVNSELEELKEFLQCARNLKGAILCVISFHSLEDALVKNAFKDYAKNCICDPSSFQCTCSNNHALGAILTKKPITPSPEEIKNNRRSRSAKMRVFQFKP.

S-adenosyl-L-methionine contacts are provided by residues 36 to 38, Asp-55, Phe-86, Asp-103, and Gln-110; that span reads GGH.

The protein belongs to the methyltransferase superfamily. RsmH family.

The protein localises to the cytoplasm. The catalysed reaction is cytidine(1402) in 16S rRNA + S-adenosyl-L-methionine = N(4)-methylcytidine(1402) in 16S rRNA + S-adenosyl-L-homocysteine + H(+). Its function is as follows. Specifically methylates the N4 position of cytidine in position 1402 (C1402) of 16S rRNA. The sequence is that of Ribosomal RNA small subunit methyltransferase H from Helicobacter pylori (strain HPAG1).